The chain runs to 496 residues: N-acetylmuramoyl-L-alanine amidase LytC (496 aa).

The first 24 residues, 1 to 24 (MRSYIKVLTMCFLGLILFVPTALA), serve as a signal peptide directing secretion. 3 repeat units span residues 30 to 128 (RVGG…ISIK), 129 to 222 (RIAG…PSPT), and 223 to 318 (RISG…NPVV). The segment at 30–318 (RVGGSNRYGT…VANQLKNPVV (289 aa)) is 3 X tandem repeats. A MurNAc-LAA domain is found at 322 to 490 (IFIDPGHGDQ…DKAAQAIHDG (169 aa)).

It belongs to the N-acetylmuramoyl-L-alanine amidase 3 family.

It localises to the secreted. The protein resides in the cell wall. The catalysed reaction is Hydrolyzes the link between N-acetylmuramoyl residues and L-amino acid residues in certain cell-wall glycopeptides.. In terms of biological role, autolysins are cell wall hydrolases involved in some important biological processes such as cell separation, cell-wall turnover, competence for genetic transformation, formation of the flagella - in particular of its basal body - and sporulation. Has a high affinity for teichoic acid-endowed peptidoglycan. LytC is required for efficient swarming motility but not at the level of cell separation or flagellum biosynthesis. Rather, LytC appears to be important for proper flagellar function. The protein is N-acetylmuramoyl-L-alanine amidase LytC (lytC) of Bacillus subtilis (strain 168).